Here is a 470-residue protein sequence, read N- to C-terminus: Solute carrier family 7 member 13 (470 aa).

Residues 1–11 lie on the Cytoplasmic side of the membrane; that stretch reads MDRGEKIQLKR. Residues 12-32 form a helical membrane-spanning segment; it reads VFGYWWGTSFLLINIIGAGIF. At 33 to 45 the chain is on the extracellular side; the sequence is VSPKGVLAYSCMN. A helical membrane pass occupies residues 46-66; the sequence is VGVSLCVWAGCAILAMTSTLC. Residues 67–87 lie on the Cytoplasmic side of the membrane; sequence SAEISISFPCSGAQYYFLKRY. A helical membrane pass occupies residues 88-108; the sequence is FGSTVAFLNLWTSLFLGSGVV. The Extracellular portion of the chain corresponds to 109 to 128; that stretch reads AGQALLLAEYSIQPFFPSCS. Residues 129–149 form a helical membrane-spanning segment; sequence VPKLPKKCLALAMLWIVGILT. Residues 150–162 are Cytoplasmic-facing; the sequence is SRGVKEVTWLQIA. A helical membrane pass occupies residues 163–183; that stretch reads SSVLKVSILSFISLTGVVFLI. Residues 184–206 lie on the Extracellular side of the membrane; that stretch reads RGKKENVERFQNAFDAELPDISH. A helical membrane pass occupies residues 207 to 227; it reads LIQAIFQGYFAYSGGACFTLI. Residues 228-240 are Cytoplasmic-facing; it reads AGELKKPRTTIPK. A helical membrane pass occupies residues 241–261; that stretch reads CIFTALPLVTVVYLLVNISYL. Topologically, residues 262 to 287 are extracellular; it reads TVLTPREILSSDAVAITWADRAFPSL. The helical transmembrane segment at 288 to 308 threads the bilayer; sequence AWIMPFAISTSLFSNLLISIF. Residues 309-336 are Cytoplasmic-facing; sequence KSSRPIYLASQEGQLPLLFNTLNSHSSP. The chain crosses the membrane as a helical span at residues 337 to 357; the sequence is FTAVLLLVTLGSLAIILTSLI. Residue Asp-358 is a topological domain, extracellular. The helical transmembrane segment at 359 to 379 threads the bilayer; it reads LINYIFFTGSLWSILLMIGIL. Topologically, residues 380–393 are cytoplasmic; that stretch reads RRRYQEPNLSIPYK. A helical membrane pass occupies residues 394-414; the sequence is VFLSFPLATIVIDVGLVVIPL. Over 415–421 the chain is Extracellular; sequence VKSPNVH. The helical transmembrane segment at 422–442 threads the bilayer; that stretch reads YVYVLLLVLSGLLFYIPLIHF. At 443-470 the chain is on the cytoplasmic side; that stretch reads KIRLAWFEKMTCYLQLLFNICLPDVSEE.

The protein belongs to the amino acid-polyamine-organocation (APC) superfamily. As to quaternary structure, disulfide-linked heterodimer composed of the catalytic light subunit SLC7A13 and the heavy subunit SLC3A1. In terms of tissue distribution, expressed in the kidney.

The protein localises to the apical cell membrane. It catalyses the reaction L-cystine(out) + L-aspartate(in) = L-cystine(in) + L-aspartate(out). The enzyme catalyses L-cystine(out) = L-cystine(in). It carries out the reaction L-aspartate(in) + L-glutamate(out) = L-aspartate(out) + L-glutamate(in). The catalysed reaction is L-aspartate(in) + L-glutamine(out) = L-aspartate(out) + L-glutamine(in). It catalyses the reaction L-aspartate(in) + L-methionine(out) = L-aspartate(out) + L-methionine(in). The enzyme catalyses L-leucine(out) + L-aspartate(in) = L-leucine(in) + L-aspartate(out). It carries out the reaction L-valine(out) + L-aspartate(in) = L-valine(in) + L-aspartate(out). The catalysed reaction is L-aspartate(in) + L-phenylalanine(out) = L-aspartate(out) + L-phenylalanine(in). It catalyses the reaction L-tyrosine(out) + L-aspartate(in) = L-tyrosine(in) + L-aspartate(out). The enzyme catalyses L-tryptophan(out) + L-aspartate(in) = L-tryptophan(in) + L-aspartate(out). Functionally, associates with SLC3A1/rBAT to form a functional heterodimeric complex that transports anionic and neutral amino acids across the apical plasma membrane of renal epithelium. Preferentially mediates exchange transport, but can also operate via facilitated diffusion. May act as a major transporter for L-cystine in late proximal tubules, ensuring its reabsorption from the luminal fluid in exchange for cytosolic L-glutamate or L-aspartate. The polypeptide is Solute carrier family 7 member 13 (SLC7A13) (Homo sapiens (Human)).